We begin with the raw amino-acid sequence, 140 residues long: MGTIFHLDIVSAEESIYSGPAEFIVAPAVMGEVGIFPQHTPMLTRIKSGVVRVKAPLQDDEEVYVSGGMLEVQPDVVTILADTAVRGKDLDEAKALEAKRKAEEIMKNKISEIEYARAQAELIEATAQLAAIQKLRKRGH.

The protein belongs to the ATPase epsilon chain family. F-type ATPases have 2 components, CF(1) - the catalytic core - and CF(0) - the membrane proton channel. CF(1) has five subunits: alpha(3), beta(3), gamma(1), delta(1), epsilon(1). CF(0) has three main subunits: a, b and c.

The protein resides in the cell inner membrane. In terms of biological role, produces ATP from ADP in the presence of a proton gradient across the membrane. The sequence is that of ATP synthase epsilon chain from Nitrosomonas europaea (strain ATCC 19718 / CIP 103999 / KCTC 2705 / NBRC 14298).